The following is a 397-amino-acid chain: Acid extracellular protease (397 aa).

A signal peptide spans methionine 1–alanine 17. Residues tyrosine 61 to alanine 378 form the Peptidase A1 domain. Residue aspartate 77 is part of the active site. Asparagine 88 carries N-linked (GlcNAc...) asparagine glycosylation. Cysteines 93 and 100 form a disulfide. Residue aspartate 264 is part of the active site. Cysteine 303 and cysteine 343 form a disulfide bridge. 2 N-linked (GlcNAc...) asparagine glycosylation sites follow: asparagine 310 and asparagine 314.

The protein belongs to the peptidase A1 family.

Its subcellular location is the secreted. The protein is Acid extracellular protease (AXP1) of Yarrowia lipolytica (strain CLIB 122 / E 150) (Yeast).